The sequence spans 89 residues: MDLNLCLLCGNSIDAEGLYCSNECRIQDKATTELFSDPLKSPSLNETIDYLALNYFDLFSRRSSMCSSSNSSIYSGIYYTELKNYSVEN.

Belongs to the ecl1 family.

It localises to the nucleus. In terms of biological role, involved in chronological cell aging. This chain is Extender of the chronological lifespan protein ecl3 (ecl3), found in Schizosaccharomyces pombe (strain 972 / ATCC 24843) (Fission yeast).